Reading from the N-terminus, the 122-residue chain is Small ribosomal subunit protein uS13 (122 aa).

A disordered region spans residues 99–122; that stretch reads RGQRTHTNARTRKGPAKAIAGKKK.

This sequence belongs to the universal ribosomal protein uS13 family. Part of the 30S ribosomal subunit. Forms a loose heterodimer with protein S19. Forms two bridges to the 50S subunit in the 70S ribosome.

Its function is as follows. Located at the top of the head of the 30S subunit, it contacts several helices of the 16S rRNA. In the 70S ribosome it contacts the 23S rRNA (bridge B1a) and protein L5 of the 50S subunit (bridge B1b), connecting the 2 subunits; these bridges are implicated in subunit movement. Contacts the tRNAs in the A and P-sites. In Rhizobium etli (strain CIAT 652), this protein is Small ribosomal subunit protein uS13.